Consider the following 107-residue polypeptide: CLAVATA3/ESR (CLE)-related protein 13 (107 aa).

A signal peptide spans 1–25 (MATTRVSHVLGFLLWISLLIFVSIG). A glycan (N-linked (GlcNAc...) asparagine) is linked at Asn29. Positions 79 to 107 (ALPAGGSEIDPRYGVEKRLVPSGPNPLHH) are disordered. Positions 87 to 97 (IDPRYGVEKRL) are enriched in basic and acidic residues. 2 positions are modified to hydroxyproline: Pro99 and Pro102. O-linked (Ara...) hydroxyproline glycosylation is present at Pro102.

It belongs to the CLV3/ESR signal peptide family. In terms of processing, the O-glycosylation (arabinosylation) of the hydroxyproline Pro-102 enhances binding affinity of the CLE13p peptide for its receptor. Mostly expressed in seedlings, roots, flowers, stems and apex, and, to a lower extent, in leaves and siliques.

The protein resides in the secreted. It is found in the extracellular space. Functionally, extracellular signal peptide that regulates cell fate. Represses root apical meristem maintenance. Regulates the transition of protophloem cells from proliferation to differentiation, thus impinging on postembryonic growth capacity of the root meristem; this signaling pathway requires CRN and CLV2. The chain is CLAVATA3/ESR (CLE)-related protein 13 from Arabidopsis thaliana (Mouse-ear cress).